A 364-amino-acid polypeptide reads, in one-letter code: Homeobox protein KNOX3 (364 aa).

The disordered stretch occupies residues 13-49; sequence TAHGQHHSQLPWGSSPLSAVISPPPQQQQQHQQQSAG. Positions 19 to 29 are enriched in polar residues; sequence HSQLPWGSSPL. Residues 246 to 266 form the ELK domain; sequence ELKHHLLKKYSGYLSSLKQEL. The homeobox; TALE-type DNA-binding region spans 267–330; the sequence is SKKKKKGKLP…NQRKRHWKPT (64 aa).

Belongs to the TALE/KNOX homeobox family. As to quaternary structure, binds DNA as a monomer. As to expression, the unit of inflorescence is the spikelet, which bears a fertile tract, the lemma, and the floret consisting of palea, two lodicules, three stamens and the pistil. The lemma is completed by the awn, an appendage homologous to the laminae of normal leaves. Expressed in the inflorescences and lemmas and at lower levels, in palea and vascular bundles.

The protein resides in the nucleus. In terms of biological role, may play a role in meristem formation and/or maintenance. Overexpression causes the hooded phenotype characterized by the appearance of an extra flower of inverse polarity on the lemma. Binds to the DNA sequence 5'-TGAC-3'. The chain is Homeobox protein KNOX3 (KNOX3) from Hordeum vulgare (Barley).